The sequence spans 118 residues: HTH-type transcriptional regulator SarT (118 aa).

Positions 55 to 78 (MRDIISYIGIDQSRIVKSVKELSK) form a DNA-binding region, H-T-H motif.

Belongs to the SarA family.

The protein resides in the cytoplasm. In terms of biological role, transcriptional regulator acting as an intermediary between major regulators SarA and agr and virulence genes. Represses alpha-hemolysin (hla) gene expression. In Staphylococcus aureus (strain Mu50 / ATCC 700699), this protein is HTH-type transcriptional regulator SarT (sarT).